The sequence spans 420 residues: uncharacterized protein (420 aa).

It belongs to the asfivirus K421R family.

It localises to the virion. This is an uncharacterized protein from Ornithodoros (relapsing fever ticks).